The sequence spans 400 residues: Clotting factor B (400 aa).

Positions 1-23 (MTWICVITLFALASATLGNKVSR) are cleaved as a signal peptide. One can recognise a Clip domain in the interval 36-80 (ECTARGGLKGSCKSLIDCPSVLATLKDSFPVVCSWNGRFQPIVCC). Cystine bridges form between Cys37–Cys79, Cys47–Cys68, and Cys53–Cys80. Positions 104-124 (LPRLHISGCGKRKVKIDITTV) are cleaved as a propeptide — activation peptide. Asn140 carries an N-linked (GlcNAc...) asparagine glycan. The 245-residue stretch at 148–392 (IAGGVEAKIG…YLDWIAKVTN (245 aa)) folds into the Peptidase S1 domain. Active-site charge relay system residues include His192 and Asp240. A glycan (N-linked (GlcNAc...) asparagine) is linked at Asn251. Disulfide bonds link Cys307/Cys329 and Cys340/Cys368. The active-site Charge relay system is the Ser344. An N-linked (GlcNAc...) asparagine glycan is attached at Asn352.

Belongs to the peptidase S1 family. CLIP subfamily. In terms of assembly, upon activation by factor C, it is converted to a two-chain active form composed of a light and a heavy chain linked by a disulfide bond.

It localises to the secreted. It carries out the reaction Selective cleavage of 98-Arg-|-Ile-99 bond in Limulus proclotting enzyme to form active clotting enzyme.. Its activity is regulated as follows. Strongly inhibited by alpha2-plasmin inhibitor and DFP. Partially inhibited by benzamidine, leupeptin and PCMB. Functionally, this enzyme is closely associated with an endotoxin-sensitive hemolymph coagulation system which may play important roles in both hemostasis and host defense mechanisms. Its active form catalyzes the activation of proclotting enzyme. Does not activate the mammalian coagulation factors factor IX, factor X, prothrombin, plasminogen, protein C or prekallikrein. Does not hydrolyze fibrinogen. Does not catalyze the activation of factor C or coagulogen. The chain is Clotting factor B from Tachypleus tridentatus (Japanese horseshoe crab).